Here is a 242-residue protein sequence, read N- to C-terminus: 7-cyano-7-deazaguanine synthase (242 aa).

An ATP-binding site is contributed by 12–22; that stretch reads FSGGQDSTTCL. 4 residues coordinate Zn(2+): Cys200, Cys215, Cys218, and Cys221.

It belongs to the QueC family. Zn(2+) is required as a cofactor.

The enzyme catalyses 7-carboxy-7-deazaguanine + NH4(+) + ATP = 7-cyano-7-deazaguanine + ADP + phosphate + H2O + H(+). It functions in the pathway purine metabolism; 7-cyano-7-deazaguanine biosynthesis. Functionally, catalyzes the ATP-dependent conversion of 7-carboxy-7-deazaguanine (CDG) to 7-cyano-7-deazaguanine (preQ(0)). In Nitratidesulfovibrio vulgaris (strain ATCC 29579 / DSM 644 / CCUG 34227 / NCIMB 8303 / VKM B-1760 / Hildenborough) (Desulfovibrio vulgaris), this protein is 7-cyano-7-deazaguanine synthase.